Consider the following 481-residue polypeptide: Xylulose kinase (481 aa).

Residue 81–82 (QH) participates in substrate binding. D239 (proton acceptor) is an active-site residue.

It belongs to the FGGY kinase family.

It carries out the reaction D-xylulose + ATP = D-xylulose 5-phosphate + ADP + H(+). Catalyzes the phosphorylation of D-xylulose to D-xylulose 5-phosphate. The protein is Xylulose kinase of Streptomyces rubiginosus.